We begin with the raw amino-acid sequence, 504 residues long: Alpha,alpha-trehalose-phosphate synthase [UDP-forming] (504 aa).

Residues Tyr-97 and Asp-151 each coordinate D-glucose 6-phosphate. Residues Arg-287 and Lys-292 each coordinate UDP. UDP-alpha-D-glucose-binding residues include Arg-287 and Lys-292. A D-glucose 6-phosphate-binding site is contributed by Arg-325. UDP-alpha-D-glucose is bound at residue 386-394 (DGMNLVSYE). Position 390 to 394 (390 to 394 (LVSYE)) interacts with UDP. A disordered region spans residues 482–504 (AGKLPTKETPVNGETSKLETSSQ). Polar residues predominate over residues 493 to 504 (NGETSKLETSSQ).

It belongs to the glycosyltransferase 20 family.

The catalysed reaction is D-glucose 6-phosphate + UDP-alpha-D-glucose = alpha,alpha-trehalose 6-phosphate + UDP + H(+). Its pathway is carbohydrate biosynthesis. In terms of biological role, synthase catalytic subunit of the trehalose synthase complex that catalyzes the production of trehalose from glucose-6-phosphate and UDP-alpha-D-glucose in a two step process. The chain is Alpha,alpha-trehalose-phosphate synthase [UDP-forming] (tpsA) from Emericella nidulans (strain FGSC A4 / ATCC 38163 / CBS 112.46 / NRRL 194 / M139) (Aspergillus nidulans).